The primary structure comprises 94 residues: Co-chaperonin GroES (94 aa).

Belongs to the GroES chaperonin family. Heptamer of 7 subunits arranged in a ring. Interacts with the chaperonin GroEL.

It localises to the cytoplasm. Functionally, together with the chaperonin GroEL, plays an essential role in assisting protein folding. The GroEL-GroES system forms a nano-cage that allows encapsulation of the non-native substrate proteins and provides a physical environment optimized to promote and accelerate protein folding. GroES binds to the apical surface of the GroEL ring, thereby capping the opening of the GroEL channel. This chain is Co-chaperonin GroES, found in Caldanaerobacter subterraneus subsp. tengcongensis (strain DSM 15242 / JCM 11007 / NBRC 100824 / MB4) (Thermoanaerobacter tengcongensis).